Reading from the N-terminus, the 158-residue chain is uncharacterized protein (158 aa).

Transmembrane regions (helical) follow at residues 10-30 (LSSLAAIIFAQVIKVPIQFIV) and 137-157 (IEVFFGGLTGILLTLVLAYFF).

The protein localises to the cell membrane. This is an uncharacterized protein from Bacillus subtilis (strain 168).